The following is a 699-amino-acid chain: Putative inactive kinesin-like protein KIN-7B (699 aa).

The Kinesin motor domain occupies 1 to 170 (MRAIQKKSLC…LLFGSCAKEV (170 aa)). A coiled-coil region spans residues 179 to 247 (VMSDKALVKH…QSRLQDLLQS (69 aa)). A disordered region spans residues 249–345 (GDHDLNRQVQ…VNSRHSRPSG (97 aa)). Residues 264–275 (RSPPSVGMPPSV) show a composition bias toward low complexity. Over residues 276-298 (SRDDSSQVSHDDSDLYKEVRCIE) the composition is skewed to basic and acidic residues. A compositionally biased stretch (polar residues) spans 313–338 (GESSSPQDSNMNSGLHGNDSNASVNS).

The protein belongs to the TRAFAC class myosin-kinesin ATPase superfamily. Kinesin family. KIN-7 subfamily.

The chain is Putative inactive kinesin-like protein KIN-7B from Oryza sativa subsp. japonica (Rice).